We begin with the raw amino-acid sequence, 396 residues long: Proteasome-activating nucleotidase (396 aa).

Residues 16 to 57 (ITYLKRRIRQLELQVRMLEADKERLERELSRLRSEMSRLRQP) are a coiled coil. ATP-binding positions include 181–186 (GCGKTL) and His-320. The segment at 394 to 396 (IYG) is docks into pockets in the proteasome alpha-ring to cause gate opening.

This sequence belongs to the AAA ATPase family. In terms of assembly, homohexamer. The hexameric complex has a two-ring architecture resembling a top hat that caps the 20S proteasome core at one or both ends. Upon ATP-binding, the C-terminus of PAN interacts with the alpha-rings of the proteasome core by binding to the intersubunit pockets.

Its subcellular location is the cytoplasm. In terms of biological role, ATPase which is responsible for recognizing, binding, unfolding and translocation of substrate proteins into the archaeal 20S proteasome core particle. Is essential for opening the gate of the 20S proteasome via an interaction with its C-terminus, thereby allowing substrate entry and access to the site of proteolysis. Thus, the C-termini of the proteasomal ATPase function like a 'key in a lock' to induce gate opening and therefore regulate proteolysis. Unfolding activity requires energy from ATP hydrolysis, whereas ATP binding alone promotes ATPase-20S proteasome association which triggers gate opening, and supports translocation of unfolded substrates. This chain is Proteasome-activating nucleotidase, found in Pyrococcus abyssi (strain GE5 / Orsay).